The chain runs to 782 residues: DNA repair and recombination protein RAD54-like (782 aa).

Positions 1–20 (MRRSLAPSQRGGQRLSSRND) are enriched in polar residues. A disordered region spans residues 1–28 (MRRSLAPSQRGGQRLSSRNDFTPPLLKK). Positions 2 to 9 (RRSLAPSQ) are required for chromatin remodeling, strand pairing activities and coupling of ATPase activity. A Phosphothreonine modification is found at Thr22. In terms of domain architecture, Helicase ATP-binding spans 168-343 (EGKRGNFNGC…FSLVNFVNPE (176 aa)). Position 181-188 (181-188 (DEMGLGKT)) interacts with ATP. The DEGH box motif lies at 294 to 297 (DEGH). In terms of domain architecture, Helicase C-terminal spans 501–658 (LLDFMLAAIR…NNESAEKHFT (158 aa)). Over residues 741–753 (SQKIETTPATETS) the composition is skewed to polar residues. Residues 741–782 (SQKIETTPATETSVEAKPEPERRKRPAMPLSDDSADEDFQGF) form a disordered region. Positions 773-782 (DSADEDFQGF) are enriched in acidic residues.

The protein belongs to the SNF2/RAD54 helicase family. Interacts (via N-terminus) with spn-A/Rad51.

The protein resides in the nucleus. Involved in mitotic DNA repair and meiotic recombination. Functions in the recombinational DNA repair pathway. Essential for interhomolog gene conversion (GC), but may have a less important role in intersister GC than spn-A/Rad51. In the presence of DNA, spn-A/Rad51 enhances the ATPase activity of okr/Rad54. This chain is DNA repair and recombination protein RAD54-like, found in Drosophila pseudoobscura pseudoobscura (Fruit fly).